We begin with the raw amino-acid sequence, 649 residues long: Transcription factor E2-alpha (649 aa).

Disordered stretches follow at residues 37-107 (RPAS…SERN), 132-207 (GLSS…AKTP), 296-325 (TYSG…SSSG), and 339-376 (DHSS…ALSP). Residues 57–71 (SESWGNSEQNSSSFD) show a composition bias toward polar residues. A compositionally biased stretch (low complexity) spans 132–148 (GLSSPGPLSPSGVKSSS). Phosphoserine occurs at positions 135 and 140. The short motif at 171–177 (PKKVRKV) is the Nuclear localization signal element. The span at 339–352 (DHSSNNFSPSPSTP) shows a compositional bias: low complexity. Residue Thr351 is modified to Phosphothreonine. Ser355 carries the phosphoserine modification. Arg367 carries the omega-N-methylarginine modification. Ser375 carries the phosphoserine modification. Residues 385 to 420 (LSKMEDRLDEAIHVLRSHAVGTASELHGLLPGHSTL) are leucine-zipper. Positions 435-547 (AGLVSGSHPE…KAEREKERRV (113 aa)) are disordered. The span at 459-477 (SLPSQPSSLPDLSQRPPDS) shows a compositional bias: low complexity. Lys494 is covalently cross-linked (Glycyl lysine isopeptide (Lys-Gly) (interchain with G-Cter in SUMO2)). Ser524 carries the phosphoserine modification. Residue Asp526 is modified to Phosphothreonine. Residues 537–547 (QKAEREKERRV) are compositionally biased toward basic and acidic residues. In terms of domain architecture, bHLH spans 544-597 (ERRVANNARERLRVRDINEAFKELGRMCQLHLSTEKPQTKLLILHQAVAVILSL). Residue Lys620 forms a Glycyl lysine isopeptide (Lys-Gly) (interchain with G-Cter in SUMO2) linkage.

In terms of assembly, homodimer. Heterodimer; efficient DNA binding requires dimerization with another bHLH protein. Forms a heterodimer with TWIST1 and TWIST2. Forms a heterodimer with NEUROD1; the heterodimer is inhibited in presence of ID2, but not NR0B2, to E-box element. Forms a heterodimer with TCF15; the heterodimer binds E-box element. Forms a heterodimer with MYOG; heterodimerization enhances MYOG DNA-binding and transcriptional activities. Forms a heterodimer with ATOH8; repress transcription of TCF3 and TCF3-NEUROG3 dimer-induced transactivation of E box-dependent promoters. Component of a nuclear TAL-1 complex composed at least of CBFA2T3, LDB1, TAL1 and TCF3. Interacts with NEUROD2. Interacts with EP300. Interacts with PTF1A, TGFB1I1. Interacts with UBE2I. Interacts with BHLHA9. Interacts with ASB2; the interaction is mediated by SKP2 and targets TCF3 for Notch-induced proteasomal degradation. Interacts with transcription factor ASCL5/AmeloD. Interacts with RALGAPA1. Interacts with FIGLA. As to quaternary structure, forms a heterodimer with ATOH7; required for ATOH7 DNA-binding. In terms of processing, phosphorylated following NGF stimulation. Undergoes Notch-induced ubiquitination and subsequent proteasomal degradation which is mediated by ASB1 or ASB2, the substrate-recognition components of probable ECS E3 ubiquitin-protein ligase complexes.

The protein resides in the nucleus. Transcriptional regulator involved in the initiation of neuronal differentiation and mesenchymal to epithelial transition. Heterodimers between TCF3 and tissue-specific basic helix-loop-helix (bHLH) proteins play major roles in determining tissue-specific cell fate during embryogenesis, like muscle or early B-cell differentiation. Together with TCF15, required for the mesenchymal to epithelial transition. Dimers bind DNA on E-box motifs: 5'-CANNTG-3'. Binds to the kappa-E2 site in the kappa immunoglobulin gene enhancer. Binds to the consensus sequence CAC/GCTGT/C present, in the chymotrypsin, insulin, AP-4, and several other gene enhancer motifs. Its function is as follows. Facilitates ATOH7 binding to DNA at the consensus sequence 5'-CAGGTG-3', and positively regulates transcriptional activity. This chain is Transcription factor E2-alpha (Tcf3), found in Rattus norvegicus (Rat).